The chain runs to 231 residues: Orotate phosphoribosyltransferase (231 aa).

Residues K27, 79-80, R106, K107, K110, H112, and 133-141 contribute to the 5-phospho-alpha-D-ribose 1-diphosphate site; these read YK and DDVMTAGTA. The orotate site is built by T137 and R166.

It belongs to the purine/pyrimidine phosphoribosyltransferase family. PyrE subfamily. In terms of assembly, homodimer. The cofactor is Mg(2+).

The catalysed reaction is orotidine 5'-phosphate + diphosphate = orotate + 5-phospho-alpha-D-ribose 1-diphosphate. The protein operates within pyrimidine metabolism; UMP biosynthesis via de novo pathway; UMP from orotate: step 1/2. Catalyzes the transfer of a ribosyl phosphate group from 5-phosphoribose 1-diphosphate to orotate, leading to the formation of orotidine monophosphate (OMP). This Bifidobacterium longum (strain NCC 2705) protein is Orotate phosphoribosyltransferase.